The sequence spans 419 residues: Synaptosomal-associated protein 47 (419 aa).

T-SNARE coiled-coil homology domains are found at residues 109-171 and 356-418; these read AANP…LTEL and KDWP…MRKL.

The protein belongs to the SVAP1 family. As to quaternary structure, associates with the BLOC-1 complex. Interacts with BLOC1S6. Forms a complex containing SNAP47, VAMP2 and STX1A.

It localises to the endomembrane system. The protein resides in the cytoplasm. The protein localises to the perinuclear region. Its function is as follows. May play a role in intracellular membrane fusion. This is Synaptosomal-associated protein 47 (Snap47) from Rattus norvegicus (Rat).